A 177-amino-acid polypeptide reads, in one-letter code: FANCD2 opposite strand protein (177 aa).

The protein is FANCD2 opposite strand protein (FANCD2OS) of Homo sapiens (Human).